Here is a 572-residue protein sequence, read N- to C-terminus: 2-isopropylmalate synthase (572 aa).

The region spanning 39–313 (PVWMSTDLRD…HPGLDFSRIN (275 aa)) is the Pyruvate carboxyltransferase domain. 4 residues coordinate Mg(2+): Asp48, His252, His254, and Asn288. The segment at 445–572 (VAAPYAYVEH…GVGRQVAATR (128 aa)) is regulatory domain.

The protein belongs to the alpha-IPM synthase/homocitrate synthase family. LeuA type 2 subfamily. In terms of assembly, homodimer. The cofactor is Mg(2+).

It is found in the cytoplasm. It catalyses the reaction 3-methyl-2-oxobutanoate + acetyl-CoA + H2O = (2S)-2-isopropylmalate + CoA + H(+). Its pathway is amino-acid biosynthesis; L-leucine biosynthesis; L-leucine from 3-methyl-2-oxobutanoate: step 1/4. In terms of biological role, catalyzes the condensation of the acetyl group of acetyl-CoA with 3-methyl-2-oxobutanoate (2-ketoisovalerate) to form 3-carboxy-3-hydroxy-4-methylpentanoate (2-isopropylmalate). In Azoarcus sp. (strain BH72), this protein is 2-isopropylmalate synthase.